Here is a 212-residue protein sequence, read N- to C-terminus: MSKIEVLLADDNREFVSLLEEYISSQYDMNVIGVAYNGNEVVRLLQERVPDVLILDIIMPHLDGLAVLEQIQAMRLSPQPKIIMLTAFGQEEITKKAVELGAAYYILKPFDMEVLAQRIRQIITTKPASSFVTSVKPQSTLQVRGRNLDASITSIIHEIGVPAHIKGYLYLREAITMVYNDVELLGSITKVLYPDIAKKFNTTASHVERAIR.

The 119-residue stretch at 5–123 folds into the Response regulatory domain; it reads EVLLADDNRE…VLAQRIRQII (119 aa). Ca(2+) contacts are provided by Asp-10, Asp-11, and Asp-56. Residue Asp-56 is modified to 4-aspartylphosphate. Positions 194–212 form a DNA-binding region, H-T-H motif; it reads PDIAKKFNTTASHVERAIR.

Ca(2+) is required as a cofactor. Post-translationally, phosphorylated by KinA and KinB.

The protein resides in the cytoplasm. Functionally, may play the central regulatory role in sporulation. It may be an element of the effector pathway responsible for the activation of sporulation genes in response to nutritional stress. Spo0A may act in concert with Spo0H (a sigma factor) to control the expression of some genes that are critical to the sporulation process. Repressor of abrB, activator of the spoIIa operon. Binds the DNA sequence 5'-TGNCGAA-3' (0A box). This Brevibacillus parabrevis protein is Stage 0 sporulation protein A (spo0A).